Consider the following 259-residue polypeptide: uncharacterized protein (259 aa).

An HD domain is found at 51–173 (GKTHAKIVAN…IAVADGTDMT (123 aa)).

This is an uncharacterized protein from Methanocaldococcus jannaschii (strain ATCC 43067 / DSM 2661 / JAL-1 / JCM 10045 / NBRC 100440) (Methanococcus jannaschii).